Reading from the N-terminus, the 717-residue chain is DNA ligase (717 aa).

NAD(+) contacts are provided by residues 41-45, 90-91, and Glu124; these read DARYD and SL. Lys126 serves as the catalytic N6-AMP-lysine intermediate. The NAD(+) site is built by Arg147, Glu183, Lys299, and Lys323. Zn(2+) is bound by residues Cys428, Cys431, Cys446, and Cys452. The BRCT domain maps to 636–717; it reads ADYSPVAGKT…WLQLINEHHI (82 aa).

Belongs to the NAD-dependent DNA ligase family. LigA subfamily. The cofactor is Mg(2+). Mn(2+) is required as a cofactor.

The enzyme catalyses NAD(+) + (deoxyribonucleotide)n-3'-hydroxyl + 5'-phospho-(deoxyribonucleotide)m = (deoxyribonucleotide)n+m + AMP + beta-nicotinamide D-nucleotide.. In terms of biological role, DNA ligase that catalyzes the formation of phosphodiester linkages between 5'-phosphoryl and 3'-hydroxyl groups in double-stranded DNA using NAD as a coenzyme and as the energy source for the reaction. It is essential for DNA replication and repair of damaged DNA. The polypeptide is DNA ligase (Bartonella bacilliformis (strain ATCC 35685 / KC583 / Herrer 020/F12,63)).